The chain runs to 1521 residues: Probable DNA topoisomerase 2 (1521 aa).

The span at 1–10 (MSDSENDYSD) shows a compositional bias: acidic residues. The interval 1 to 87 (MSDSENDYSD…DDKSSSSDNE (87 aa)) is disordered. Over residues 36-48 (SKKKASATRKPAA) the composition is skewed to basic residues. A compositionally biased stretch (low complexity) spans 49 to 62 (KKATTTTTSTTKKS). Residues Asn-163, Asn-192, 220–222 (SSH), and 233–240 (GRNGFGAK) contribute to the ATP site. The tract at residues 412 to 414 (NKK) is interaction with DNA. 446 to 448 (QTK) is an ATP binding site. In terms of domain architecture, Toprim spans 527–640 (CTLILTEGDS…TLLRMPGFLV (114 aa)). Residues Glu-533, Asp-609, and Asp-611 each coordinate Mg(2+). Residues 771 to 1273 (IPNIVDGLKT…PIQEIYKRDL (503 aa)) enclose the Topo IIA-type catalytic domain. Tyr-861 acts as the O-(5'-phospho-DNA)-tyrosine intermediate in catalysis. Residues 1007 to 1047 (GTRKKKKEEKEKKAASRKGTKAKPTTTKRSKRVDDDDDNEK) are disordered. A compositionally biased stretch (basic residues) spans 1021–1037 (ASRKGTKAKPTTTKRSK). The segment at 1085 to 1094 (KLVSTINETN) is interaction with DNA. Disordered regions lie at residues 1192–1222 (KIKK…EQDD) and 1335–1521 (IPTT…SDSD). The segment covering 1201 to 1222 (DEEDAAISSDEEKDGAQEEQDD) has biased composition (acidic residues). The segment covering 1354–1368 (TTSTSTSTTTSSNTK) has biased composition (low complexity). Over residues 1422–1438 (LSDESDQESDQESDQGS) the composition is skewed to acidic residues. Low complexity predominate over residues 1454-1467 (PTTIATKKATTSKS). Residues 1468-1480 (KVIDDKSSDDEVI) show a composition bias toward basic and acidic residues. Residues 1503 to 1521 (SDSDDDDLYDNEESSSDSD) show a composition bias toward acidic residues.

The protein belongs to the type II topoisomerase family. Homodimer. The cofactor is Mg(2+). Mn(2+) serves as cofactor. It depends on Ca(2+) as a cofactor.

It localises to the nucleus. The enzyme catalyses ATP-dependent breakage, passage and rejoining of double-stranded DNA.. In terms of biological role, control of topological states of DNA by transient breakage and subsequent rejoining of DNA strands. Topoisomerase II makes double-strand breaks. This is Probable DNA topoisomerase 2 (top2) from Dictyostelium discoideum (Social amoeba).